A 178-amino-acid chain; its full sequence is Large ribosomal subunit protein uL6 (178 aa).

The protein belongs to the universal ribosomal protein uL6 family. Part of the 50S ribosomal subunit.

Functionally, this protein binds to the 23S rRNA, and is important in its secondary structure. It is located near the subunit interface in the base of the L7/L12 stalk, and near the tRNA binding site of the peptidyltransferase center. The sequence is that of Large ribosomal subunit protein uL6 from Thermobifida fusca (strain YX).